The chain runs to 213 residues: Adenylate kinase (213 aa).

Position 10-15 (10-15 (GSGKGT)) interacts with ATP. Residues 30 to 59 (SVGDLLRNIISSSSELGKKIKGTVESGNLI) are NMP. Residues R36, 57–59 (NLI), 83–86 (GFPR), and Q90 each bind AMP. The LID stretch occupies residues 125–160 (NRLACLDCKSIYSVSSFKSTTCAKCKSTRLEKRIDD). R126 contributes to the ATP binding site. Zn(2+) is bound by residues C129 and C132. 135–136 (IY) lines the ATP pocket. Zn(2+) contacts are provided by C146 and C149. Residues R157 and R169 each contribute to the AMP site. L195 contributes to the ATP binding site.

Belongs to the adenylate kinase family. Monomer.

It localises to the cytoplasm. The enzyme catalyses AMP + ATP = 2 ADP. The protein operates within purine metabolism; AMP biosynthesis via salvage pathway; AMP from ADP: step 1/1. Functionally, catalyzes the reversible transfer of the terminal phosphate group between ATP and AMP. Plays an important role in cellular energy homeostasis and in adenine nucleotide metabolism. The polypeptide is Adenylate kinase (Wolbachia sp. subsp. Drosophila simulans (strain wRi)).